Here is a 477-residue protein sequence, read N- to C-terminus: E3 ubiquitin-protein ligase TRIM17 (477 aa).

Residues 16 to 66 (CSICLDYFTDPVMTACGHNFCRECIQMSWEKGKVKKGKKKQKGSFPCPECR) form an RING-type zinc finger. The B box-type zinc finger occupies 94–135 (QKRDLCQAHQEPLKLFCQDDQSPICVVCREAQEHRMHRVLPL). Cys-99, His-102, Cys-121, and His-127 together coordinate Zn(2+). Positions 135-226 (LDEAAREYKL…KLQDSKASLD (92 aa)) form a coiled coil. The 200-residue stretch at 276–475 (AIKTLCRVPG…MVISTVTMWV (200 aa)) folds into the B30.2/SPRY domain.

It belongs to the TRIM/RBCC family. Interacts (via coiled coil) with TRIM44 (via coiled coil). Interacts with TRIM28; this interaction prevents TRIM28 activity on BCL2A1. Interacts with TRIM41; this interaction prevents TRIM41 activity on ZSCAN2. Interacts with BECN1. Interacts with NFATC3 and NFATC4; these interactions prevent NFATC3 and NFATC4 nuclear localization. Post-translationally, auto-ubiquitinated. In terms of tissue distribution, almost exclusively in the testis.

Its subcellular location is the cytoplasm. The protein resides in the lysosome. The catalysed reaction is S-ubiquitinyl-[E2 ubiquitin-conjugating enzyme]-L-cysteine + [acceptor protein]-L-lysine = [E2 ubiquitin-conjugating enzyme]-L-cysteine + N(6)-ubiquitinyl-[acceptor protein]-L-lysine.. The protein operates within protein modification; protein ubiquitination. E3 ubiquitin ligase that plays important roles in the regulation of neuronal apoptosis, selective autophagy or cell proliferation. Stimulates the degradation of kinetochore ZW10 interacting protein ZWINT in a proteasome-dependent manner, leading to negative regulation of cell proliferation. Inhibits autophagic degradation of diverse known targets while contributing to autophagy of midbodies. Autophagy-inhibitory activity involves MCL1, which TRIM17 assembles into complexes with the key autophagy regulator BECN1. Controls neuronal apoptosis by mediating ubiquitination and degradation of MCL1 to initiate neuronal death. In addition, regulates NFAT transcription factors NFATC3 and NFATC4 activities by preventing their nuclear localization, thus inhibiting their transcriptional activities. Decreases TRIM41-mediated degradation of ZSCAN2 thereby stimulating alpha-synuclein/SNCA transcription in neuronal cells. Prevents the E3 ubiquitin-ligase activity of TRIM28 and its interaction with anti-apoptotic BCL2A1, blocking TRIM28 from ubiquitinating BCL2A1. The protein is E3 ubiquitin-protein ligase TRIM17 (Trim17) of Mus musculus (Mouse).